The chain runs to 393 residues: DNA-directed RNA polymerase subunit Rpo1C (393 aa).

The protein belongs to the RNA polymerase beta' chain family. In terms of assembly, part of the 13-subunit RNA polymerase complex. Interacts with TFS4.

The protein localises to the cytoplasm. It catalyses the reaction RNA(n) + a ribonucleoside 5'-triphosphate = RNA(n+1) + diphosphate. Its function is as follows. DNA-dependent RNA polymerase (RNAP) catalyzes the transcription of DNA into RNA using the four ribonucleoside triphosphates as substrates. Forms part of the jaw domain. In terms of biological role, reconstitution experiments show this subunit is required for basic activity. The polypeptide is DNA-directed RNA polymerase subunit Rpo1C (Sulfolobus acidocaldarius (strain ATCC 33909 / DSM 639 / JCM 8929 / NBRC 15157 / NCIMB 11770)).